Reading from the N-terminus, the 275-residue chain is Fructose-2,6-bisphosphatase TIGAR (275 aa).

H11 acts as the Tele-phosphohistidine intermediate in catalysis. E89 (proton donor/acceptor) is an active-site residue.

The protein belongs to the phosphoglycerate mutase family.

Its subcellular location is the cytoplasm. The protein localises to the nucleus. It localises to the mitochondrion. The enzyme catalyses beta-D-fructose 2,6-bisphosphate + H2O = beta-D-fructose 6-phosphate + phosphate. In terms of biological role, fructose-bisphosphatase hydrolyzing fructose-2,6-bisphosphate as well as fructose-1,6-bisphosphate. Acts as a negative regulator of glycolysis by lowering intracellular levels of fructose-2,6-bisphosphate in a p53/TP53-dependent manner, resulting in the pentose phosphate pathway (PPP) activation and NADPH production. Contributes to the generation of reduced glutathione to cause a decrease in intracellular reactive oxygen species (ROS) content, correlating with its ability to protect cells from oxidative or metabolic stress-induced cell death. May play a role in mitophagy inhibition. This chain is Fructose-2,6-bisphosphatase TIGAR, found in Xenopus laevis (African clawed frog).